A 365-amino-acid chain; its full sequence is Methionine import ATP-binding protein MetN (365 aa).

The ABC transporter domain maps to 26 to 261 (VRLVDLKRRF…PQSDITKSLL (236 aa)). Residue 58–65 (GRSGAGKS) coordinates ATP.

It belongs to the ABC transporter superfamily. Methionine importer (TC 3.A.1.24) family. The complex is composed of two ATP-binding proteins (MetN), two transmembrane proteins (MetI) and a solute-binding protein (MetQ).

It is found in the cell inner membrane. The catalysed reaction is L-methionine(out) + ATP + H2O = L-methionine(in) + ADP + phosphate + H(+). The enzyme catalyses D-methionine(out) + ATP + H2O = D-methionine(in) + ADP + phosphate + H(+). Part of the ABC transporter complex MetNIQ involved in methionine import. Responsible for energy coupling to the transport system. The chain is Methionine import ATP-binding protein MetN from Mesorhizobium japonicum (strain LMG 29417 / CECT 9101 / MAFF 303099) (Mesorhizobium loti (strain MAFF 303099)).